We begin with the raw amino-acid sequence, 222 residues long: Histidine biosynthesis bifunctional protein HisIE (222 aa).

Positions 1–128 are phosphoribosyl-AMP cyclohydrolase; it reads MQPLSPAFID…SLTLPPPMDA (128 aa). The phosphoribosyl-ATP pyrophosphohydrolase stretch occupies residues 129-222; it reads CSELFRVIDQ…ANRRGAPRRN (94 aa).

It in the N-terminal section; belongs to the PRA-CH family. In the C-terminal section; belongs to the PRA-PH family.

The protein resides in the cytoplasm. The enzyme catalyses 1-(5-phospho-beta-D-ribosyl)-ATP + H2O = 1-(5-phospho-beta-D-ribosyl)-5'-AMP + diphosphate + H(+). The catalysed reaction is 1-(5-phospho-beta-D-ribosyl)-5'-AMP + H2O = 1-(5-phospho-beta-D-ribosyl)-5-[(5-phospho-beta-D-ribosylamino)methylideneamino]imidazole-4-carboxamide. It functions in the pathway amino-acid biosynthesis; L-histidine biosynthesis; L-histidine from 5-phospho-alpha-D-ribose 1-diphosphate: step 2/9. It participates in amino-acid biosynthesis; L-histidine biosynthesis; L-histidine from 5-phospho-alpha-D-ribose 1-diphosphate: step 3/9. The protein is Histidine biosynthesis bifunctional protein HisIE of Prochlorococcus marinus (strain MIT 9313).